We begin with the raw amino-acid sequence, 1401 residues long: DNA-directed RNA polymerase subunit beta' (1401 aa).

4 residues coordinate Zn(2+): Cys-70, Cys-72, Cys-85, and Cys-88. Mg(2+) is bound by residues Asp-460, Asp-462, and Asp-464. Zn(2+)-binding residues include Cys-814, Cys-888, Cys-895, and Cys-898. The disordered stretch occupies residues 1369 to 1388 (RQKQKAVEQEGPSAEQATDN).

It belongs to the RNA polymerase beta' chain family. As to quaternary structure, the RNAP catalytic core consists of 2 alpha, 1 beta, 1 beta' and 1 omega subunit. When a sigma factor is associated with the core the holoenzyme is formed, which can initiate transcription. The cofactor is Mg(2+). Zn(2+) serves as cofactor.

The catalysed reaction is RNA(n) + a ribonucleoside 5'-triphosphate = RNA(n+1) + diphosphate. In terms of biological role, DNA-dependent RNA polymerase catalyzes the transcription of DNA into RNA using the four ribonucleoside triphosphates as substrates. This is DNA-directed RNA polymerase subunit beta' from Aliivibrio fischeri (strain ATCC 700601 / ES114) (Vibrio fischeri).